Here is a 225-residue protein sequence, read N- to C-terminus: UPF0502 protein Ajs_3392 (225 aa).

This sequence belongs to the UPF0502 family.

This Acidovorax sp. (strain JS42) protein is UPF0502 protein Ajs_3392.